The primary structure comprises 552 residues: MVVETIERSCEGSKRRHVNGGDIAVPCSGEECSNGDINVAPGVSAKRARVSREMTFEDIYGADALLNDDDDEDDDCDWEPVQAPMEFVKWCCVNCTMSNPGDMVHCCICGEHKESGILRHGYLASPFFKDTGLIEVEEKYGGSSSATSSTAVGFDERMLLHSEFEVKAQPHPERPDRLRAIAASLATAGVFPGRCLPINAREITKQELQMVHTSEHVDAVDTTSQLLYSYFTSDTYANEYSARAARLAAGLCADLATDIFTGRVKNGFALVRPPGHHAGVRHAMGFCLHNNAAVAALVAQAAGAKKVLIVDWDVHHGNGTQEIFEQNKSVLYISLHRHEGGNFYPGTGAADEVGSNGGEGYCVNVPWSCGGVGDKDYIFAFQHVVLPIASAFSPDFVIISAGFDAARGDPLGCCDVTPAGYSRMTQMLGDLCGGKMLVILEGGYNLRSISASATAVIKVLLGENPENELPIATTPSVAGLQTVLDVLNIQLEFWPSLAISYSKLLSELEARLIENKKNQMKRKVVRVPTWWKWGRKKLLYNFLSARMISRSK.

The RanBP2-type zinc finger occupies 86-115 (EFVKWCCVNCTMSNPGDMVHCCICGEHKES). The interval 149–462 (STAVGFDERM…ATAVIKVLLG (314 aa)) is histone deacetylase. Histidine 277 acts as the Proton donor/acceptor in catalysis. Positions 313, 315, and 404 each coordinate Zn(2+).

This sequence belongs to the histone deacetylase family. HD type 2 subfamily. As to quaternary structure, interacts with PIF3 in the dark. Interacts with HY5. Interacts with MYB96. Forms homotetramers. Requires Zn(2+) as cofactor. As to expression, expressed in stems, leaves, flowers, siliques and mature seeds.

The protein localises to the nucleus. Its subcellular location is the cytoplasm. It carries out the reaction N(6)-acetyl-L-lysyl-[histone] + H2O = L-lysyl-[histone] + acetate. Inhibited by trichostatin A (TSA), a well-known histone deacetylase inhibitor. Responsible for the deacetylation of lysine residues on the N-terminal part of the core histones (H2A, H2B, H3 and H4). Histone deacetylation gives a tag for epigenetic repression and plays an important role in transcriptional regulation, cell cycle progression and developmental events. Histone deacetylases act via the formation of large multiprotein complexes. Represses chlorophyll biosynthesis and photosynthesis in the dark. Is recruited by PIF3 to the promoters of chlorophyll biosynthetic and photosynthetic genes, and represses their transcription by histone deacetylation. Involved in the repression of hypocotyl cell elongation to promote photomorphogenesis. Is recruited by HY5 to the promoters of a subset of cell wall organization and auxin signaling-related genes, and represses gene expression by decreasing the levels of histone H4 acetylation in a light-dependent manner. Promotes abscisic acid (ABA) signaling. Is recruited by MYB96 to the promoters of a subset of Rho GTPase (ROP) genes, which repress ABA signaling at the early stages of signal transduction. Represses ROP expression by removing acetyl groups of histone H3 and H4 from the cognate regions, particularly in the presence of ABA. Represses the plant response to elevated ambient temperature by directly repressing warm temperature-responsive genes. The sequence is that of Histone deacetylase 15 from Arabidopsis thaliana (Mouse-ear cress).